Reading from the N-terminus, the 233-residue chain is Glutathione S-transferase 2 (233 aa).

A GST N-terminal domain is found at 17–101 (QKMIIYDTPA…YIDALDGTPT (85 aa)). Glutathione-binding positions include Tyr29, His58, Val72, 85 to 86 (EC), and His133. Residues 106–233 (TPLEKGVIHM…KLLEIRSKSS (128 aa)) form the GST C-terminal domain.

The protein belongs to the GST superfamily. Homodimer.

It catalyses the reaction RX + glutathione = an S-substituted glutathione + a halide anion + H(+). This Saccharomyces cerevisiae (strain ATCC 204508 / S288c) (Baker's yeast) protein is Glutathione S-transferase 2 (GTT2).